The following is a 101-amino-acid chain: AFA-III adhesin operon regulatory protein (101 aa).

Functionally, regulates the transcription of genes involved in the biosynthesis of afimbrial adhesin-III. The protein is AFA-III adhesin operon regulatory protein (afaA) of Escherichia coli.